The sequence spans 642 residues: Chaperone protein HtpG (642 aa).

An a; substrate-binding region spans residues 1 to 349 (MSAATETEVR…SADLPLNVSR (349 aa)). The interval 216-238 (ELPPAPPAKEGEEPEPPKTPEWE) is disordered. Over residues 224-236 (KEGEEPEPPKTPE) the composition is skewed to basic and acidic residues. The tract at residues 350–570 (EILQQNRQVE…AHDMSATLER (221 aa)) is b. The c stretch occupies residues 571 to 642 (LLKEAGQEVP…VKRLNKLLMG (72 aa)).

The protein belongs to the heat shock protein 90 family. Homodimer.

The protein resides in the cytoplasm. Its function is as follows. Molecular chaperone. Has ATPase activity. This is Chaperone protein HtpG from Magnetococcus marinus (strain ATCC BAA-1437 / JCM 17883 / MC-1).